A 188-amino-acid chain; its full sequence is Protein TIFY 9 (188 aa).

A disordered region spans residues 20 to 41 (DADDRHAKSGGSSASSSSSIRG). The segment covering 28 to 38 (SGGSSASSSSS) has biased composition (low complexity). The Tify domain maps to 80–114 (AAAAAAPMTLFYNGSVAVFDVSHDKAEAIMRMATE). The Jas signature appears at 135–160 (PLTRTKSLQRFLSKRKERLTSLGPYQ). Positions 156 to 188 (LGPYQVGGPAAVGATTSTTTKSFLAKEEEHTAS) are disordered. The segment covering 179–188 (LAKEEEHTAS) has biased composition (basic and acidic residues).

The protein belongs to the TIFY/JAZ family. As to quaternary structure, interacts with COI1A and COI2 in a coronatine-dependent manner. Coronatine is an analog of jasmonoyl isoleucine (JA-Ile). Ubiquitinated. Targeted for degradation by the SCF(COI1) E3 ubiquitin ligase-proteasome pathway during jasmonate signaling.

Functionally, repressor of jasmonate responses. In Oryza sativa subsp. japonica (Rice), this protein is Protein TIFY 9.